The sequence spans 335 residues: S-adenosylmethionine:tRNA ribosyltransferase-isomerase (335 aa).

The protein belongs to the QueA family. Monomer.

It is found in the cytoplasm. The enzyme catalyses 7-aminomethyl-7-carbaguanosine(34) in tRNA + S-adenosyl-L-methionine = epoxyqueuosine(34) in tRNA + adenine + L-methionine + 2 H(+). It functions in the pathway tRNA modification; tRNA-queuosine biosynthesis. Functionally, transfers and isomerizes the ribose moiety from AdoMet to the 7-aminomethyl group of 7-deazaguanine (preQ1-tRNA) to give epoxyqueuosine (oQ-tRNA). The chain is S-adenosylmethionine:tRNA ribosyltransferase-isomerase from Thermosipho africanus (strain TCF52B).